The chain runs to 183 residues: Streptavidin-V1 (183 aa).

Positions 1 to 24 are cleaved as a signal peptide; that stretch reads MRKIVVAAIAVSLTTVSITASASA. Residues 37–159 enclose the Avidin-like domain; the sequence is AEAGITGTWY…GHDTFTKVKP (123 aa). Biotin contacts are provided by tyrosine 67 and tyrosine 78. The short motif at 83–85 is the Cell attachment site; atypical element; it reads RYD. Biotin-binding residues include tryptophan 116, tryptophan 132, and tryptophan 144.

The protein belongs to the avidin/streptavidin family. In terms of assembly, homotetramer.

It localises to the secreted. The biological function of streptavidin is not known. Forms a strong non-covalent specific complex with biotin (one molecule of biotin per subunit of streptavidin). This chain is Streptavidin-V1, found in Streptomyces violaceus (Streptomyces venezuelae).